The sequence spans 609 residues: Kelch domain-containing protein 10 homolog (609 aa).

The segment at alanine 103–glutamate 146 is disordered. Residues serine 104 to serine 137 are compositionally biased toward acidic residues. Kelch repeat units follow at residues histidine 214–asparagine 277, leucine 279–histidine 334, phenylalanine 335–histidine 381, histidine 389–glycine 437, glutamate 458–asparagine 508, and cysteine 510–asparagine 554. Residues leucine 576–glutamine 609 are disordered.

Interacts with Elongin-C; may be the substrate recognition component of an E3 ubiquitin ligase complex.

Its function is as follows. Activates the Pk92B/DASK1-MAPK signaling cascade. The polypeptide is Kelch domain-containing protein 10 homolog (slim) (Drosophila melanogaster (Fruit fly)).